The primary structure comprises 298 residues: Super small secreted glycoprotein (298 aa).

The N-terminal stretch at 1 to 32 (MGVTGILQLPRDRFKRTSFFLWVIILFQRTFS) is a signal peptide. Residue Asn-40 is glycosylated (N-linked (GlcNAc...) asparagine; by host). Cystine bridges form between Cys-108/Cys-135 and Cys-121/Cys-147. Asn-204, Asn-228, Asn-238, Asn-257, and Asn-268 each carry an N-linked (GlcNAc...) asparagine; by host glycan.

The protein belongs to the filoviruses glycoprotein family.

The protein localises to the secreted. The chain is Super small secreted glycoprotein (GP) from Epomops franqueti (Franquet's epauletted fruit bat).